Here is a 423-residue protein sequence, read N- to C-terminus: Serine hydroxymethyltransferase (423 aa).

Residue 121-123 (GHI) participates in (6S)-5,6,7,8-tetrahydrofolate binding. Position 227 is an N6-(pyridoxal phosphate)lysine (lysine 227). Glutamate 242 contacts (6S)-5,6,7,8-tetrahydrofolate.

It belongs to the SHMT family. Homodimer. Pyridoxal 5'-phosphate is required as a cofactor.

Its subcellular location is the cytoplasm. The enzyme catalyses 5,10-methylenetetrahydromethanopterin + glycine + H2O = 5,6,7,8-tetrahydromethanopterin + L-serine. It participates in amino-acid biosynthesis; glycine biosynthesis; glycine from L-serine: step 1/1. In terms of biological role, catalyzes the reversible interconversion of serine and glycine with tetrahydromethanopterin (H4MPT) serving as the one-carbon carrier. Also exhibits a pteridine-independent aldolase activity toward beta-hydroxyamino acids, producing glycine and aldehydes, via a retro-aldol mechanism. This is Serine hydroxymethyltransferase from Methanothermobacter marburgensis (strain ATCC BAA-927 / DSM 2133 / JCM 14651 / NBRC 100331 / OCM 82 / Marburg) (Methanobacterium thermoautotrophicum).